The following is a 726-amino-acid chain: Transmembrane channel-like protein 8 (726 aa).

The Cytoplasmic portion of the chain corresponds to 1 to 114 (MLLPRSVSSE…GIRSYFTFLR (114 aa)). The residue at position 6 (serine 6) is a Phosphoserine. A helical membrane pass occupies residues 115–135 (FLLLLNLLSLLLTASFVLLPL). At 136-200 (VWLRPPDPGP…VGPESSSVYS (65 aa)) the chain is on the lumenal side. Asparagine 148 carries an N-linked (GlcNAc...) asparagine glycan. A helical transmembrane segment spans residues 201-221 (IRLAYLLSPLACLLLCFCGTL). Residues 222-299 (RRMVKGLPQK…AQTACRLLSY (78 aa)) lie on the Cytoplasmic side of the membrane. A helical membrane pass occupies residues 300 to 320 (LRVNVLNGLLVVGAISAIFWA). At 321–338 (TKYSQDNKEESLFLLLQY) the chain is on the lumenal side. Residues 339–359 (LPPGVIALVNFLGPLLFTFLV) traverse the membrane as a helical segment. Residues 360–426 (QLENYPPNTE…QCWENSVGEE (67 aa)) are Cytoplasmic-facing. The segment at 362–530 (ENYPPNTEVN…SSRPFRASSS (169 aa)) is TMC domain. A helical membrane pass occupies residues 427–447 (LYKLSIFNFLLTVAFAFLVTL). Residues 448 to 488 (PRRLLVDRFSGRFWAWLEREEFLVPKNVLDIVAGQTVTWMG) are Lumenal-facing. Residues 489 to 509 (LFYCPLLPLLNSVFLFLTFYI) traverse the membrane as a helical segment. Residues 510–531 (KKYTLLKNSRASSRPFRASSST) are Cytoplasmic-facing. Residues 532-552 (FFFQLVLLLGLLLAAVPLGYV) traverse the membrane as a helical segment. Over 553-594 (VSSIHSSWDCGLFTNYSAPWQVVPELVALGLPPIGQRALHYL) the chain is Lumenal. An N-linked (GlcNAc...) asparagine glycan is attached at asparagine 567. Residues 595-615 (GSHAFSFPLLIMLSLVLTVCV) form a helical membrane-spanning segment. The Cytoplasmic portion of the chain corresponds to 616–726 (SQTQANARAI…RFRFPSGAEL (111 aa)). The interval 651–726 (PEPGPSDSPG…RFRFPSGAEL (76 aa)) is disordered. The span at 652-662 (EPGPSDSPGPK) shows a compositional bias: pro residues. 2 positions are modified to phosphoserine: serine 658 and serine 673.

Belongs to the TMC family. In terms of assembly, interacts with TMC6. Interacts and forms a complex with TMC6 and CIB1; the interaction stabilizes each component of the complex. Interacts and forms a complex with TMC6 and SLC30A1/ZNT1; the interaction regulates zinc transport into the ER. Interacts with TRADD; the interaction competes with TRADD/RIPK1/TRAF2/cIAPs complex I formation and facilites complex II formation. (Microbial infection) Interacts with human papillomavirus 16/HPV16 protein E5; the interaction alleviates TMC8-mediated transcription factors inhibition. As to expression, expressed in placenta, prostate and testis.

Its subcellular location is the endoplasmic reticulum membrane. The protein resides in the golgi apparatus membrane. The protein localises to the nucleus membrane. Acts as a regulatory protein involved in the regulation of numerous cellular processes. Together with its homolog TMC6/EVER1, forms a complex with calcium-binding protein CIB1 in lymphocytes and keratynocytes where TMC6 and TMC8 stabilize CIB1 levels and reciprocally. Together with TMC6, also forms a complex with and activates zinc transporter ZNT1 at the ER membrane of keratynocytes, thereby facilitating zinc uptake into the ER. Also inhibits receptor-mediated calcium release from ER stores and calcium activated and volume regulated chloride channels. Down-regulates the activity of transcription factors induced by zinc and cytokines. Also sequesters TRADD which impairs the recruitment of TRAF2 and RIPK1 in the pro-survival complex I and promotes proapoptotic complex II formation, and may therefore be involved in TNF-induced cell death/survival decisions. This Homo sapiens (Human) protein is Transmembrane channel-like protein 8.